A 174-amino-acid polypeptide reads, in one-letter code: RNA pyrophosphohydrolase (174 aa).

The Nudix hydrolase domain maps to 6–149; the sequence is GFRANVGIII…KRDVYRKVMK (144 aa). A Nudix box motif is present at residues 38 to 59; the sequence is GGVDDGESAEEAMYRELYEEVG.

Belongs to the Nudix hydrolase family. RppH subfamily. Requires a divalent metal cation as cofactor.

In terms of biological role, accelerates the degradation of transcripts by removing pyrophosphate from the 5'-end of triphosphorylated RNA, leading to a more labile monophosphorylated state that can stimulate subsequent ribonuclease cleavage. This chain is RNA pyrophosphohydrolase, found in Shewanella oneidensis (strain ATCC 700550 / JCM 31522 / CIP 106686 / LMG 19005 / NCIMB 14063 / MR-1).